The sequence spans 242 residues: MKKREIKKICLLYLQIIVFYSIMVSSMRRGKHHSKKKGELKIIKRANPFGKKKINRGSKSHSLLYLKNCELRNSGRRNTHLRDLFDHLSGGQPLRDSNIEEYHLTPKLRKTVQFFQALPNDPYRKSQEVILLGRKCPPMPEELKNRGCQSTVYVHPTVEDREGKKIIAWVGDSDGLLTKGIVYILVDGLSGYPPEQILRVNPNFITLTGISEFLTMSRINGYLNIMNKMKAFSTSIMQNGER.

Cys148 functions as the Cysteine persulfide intermediate in the catalytic mechanism.

The protein belongs to the SufE family. In terms of assembly, monomer. Interacts with SufS; interaction enhances cysteine desulfurase activity of SufS.

The protein resides in the plastid. It is found in the apicoplast. It functions in the pathway cofactor biosynthesis; iron-sulfur cluster biosynthesis. Participates in sulfur mobilization (SUF) pathway for iron-sulfur (Fe-S) cluster biogenesis. Enhances cysteine desulfurase activity of SufS. Probably functions as a sulfur acceptor for SufS. In Plasmodium vivax, this protein is Cysteine desulfuration protein SufE.